Consider the following 382-residue polypeptide: MAIFYDDPLERLNQPIKTKSYRKKQVVQRVHVFIFDNWKLILLGILNLIFLIIAIVFAILFFVGSADCAQLPDYTTSPASQLTTSAISSRTSEVQTNAITTTQGTPSNKTSTTTPSTSKVICASGFTLVGTKCGKLVSSNQPRTEADSICKGYGGSTLFSVRNEQETRDMLDFVKDSNIDFLWTGLVCNQTARTSCIWDVKSGTTADYNNFADGFPNVVYGYCIYFIVTGNSAGQWGSEQCSQLMNFVCELPTTIRDPDCKYNYNKNCYIRFDITLTIPQAQRFCNEKGADLVSIHSANENRFILTIYDIHGQILLGGLAPAVDFIVWLDGSPTTYSNLLYFYDTRSCVLMTVARGGPYDGDWYTMNCNVQEFFLCKRAIDF.

The Cytoplasmic segment spans residues 1-40 (MAIFYDDPLERLNQPIKTKSYRKKQVVQRVHVFIFDNWKL). The helical transmembrane segment at 41–61 (ILLGILNLIFLIIAIVFAILF) threads the bilayer. Residues 62 to 382 (FVGSADCAQL…FFLCKRAIDF (321 aa)) lie on the Extracellular side of the membrane. Residues 97–116 (NAITTTQGTPSNKTSTTTPS) are disordered. Residues 100 to 116 (TTTQGTPSNKTSTTTPS) are compositionally biased toward low complexity. N-linked (GlcNAc...) asparagine glycosylation is found at Asn-108 and Asn-189. 2 consecutive C-type lectin domains span residues 129 to 250 (VGTK…FVCE) and 264 to 377 (YNKN…FLCK). 4 cysteine pairs are disulfide-bonded: Cys-150–Cys-249, Cys-223–Cys-241, Cys-285–Cys-376, and Cys-348–Cys-368.

As to expression, expressed in ventral cord motor neurons and PLM touch neurons.

Its subcellular location is the membrane. Functionally, involved in negative modulation of unc-40-mediated axon outgrowth. Required for proper presynaptic development in axons that have reached their targets. May function in concert with E3 ubiquitin-protein ligase rpm-1 in regulating axon outgrowth. This is C-type lectin domain-containing protein 38 from Caenorhabditis elegans.